The primary structure comprises 204 residues: ATP phosphoribosyltransferase (204 aa).

The protein belongs to the ATP phosphoribosyltransferase family. Short subfamily. Heteromultimer composed of HisG and HisZ subunits.

The protein localises to the cytoplasm. It catalyses the reaction 1-(5-phospho-beta-D-ribosyl)-ATP + diphosphate = 5-phospho-alpha-D-ribose 1-diphosphate + ATP. Its pathway is amino-acid biosynthesis; L-histidine biosynthesis; L-histidine from 5-phospho-alpha-D-ribose 1-diphosphate: step 1/9. In terms of biological role, catalyzes the condensation of ATP and 5-phosphoribose 1-diphosphate to form N'-(5'-phosphoribosyl)-ATP (PR-ATP). Has a crucial role in the pathway because the rate of histidine biosynthesis seems to be controlled primarily by regulation of HisG enzymatic activity. The sequence is that of ATP phosphoribosyltransferase from Staphylococcus epidermidis (strain ATCC 35984 / DSM 28319 / BCRC 17069 / CCUG 31568 / BM 3577 / RP62A).